We begin with the raw amino-acid sequence, 680 residues long: Methionine--tRNA ligase (680 aa).

A 'HIGH' region motif is present at residues 15 to 25 (PYANGSIHLGH). 4 residues coordinate Zn(2+): Cys-146, Cys-149, Cys-159, and Cys-162. The short motif at 332-336 (KMSKS) is the 'KMSKS' region element. Lys-335 contributes to the ATP binding site. The region spanning 579–680 (DFAKVDMRIA…EGAQPGMRVM (102 aa)) is the tRNA-binding domain.

Belongs to the class-I aminoacyl-tRNA synthetase family. MetG type 1 subfamily. Homodimer. The cofactor is Zn(2+).

The protein resides in the cytoplasm. The enzyme catalyses tRNA(Met) + L-methionine + ATP = L-methionyl-tRNA(Met) + AMP + diphosphate. Is required not only for elongation of protein synthesis but also for the initiation of all mRNA translation through initiator tRNA(fMet) aminoacylation. This chain is Methionine--tRNA ligase, found in Photobacterium profundum (strain SS9).